A 495-amino-acid polypeptide reads, in one-letter code: Putative aldehyde dehydrogenase AldA (495 aa).

212-218 contributes to the NAD(+) binding site; it reads GKGSESG. Catalysis depends on residues glutamate 256 and cysteine 290.

It belongs to the aldehyde dehydrogenase family.

It carries out the reaction an aldehyde + NAD(+) + H2O = a carboxylate + NADH + 2 H(+). This chain is Putative aldehyde dehydrogenase AldA (aldA), found in Staphylococcus aureus (strain MRSA252).